Consider the following 505-residue polypeptide: Probable alpha-L-arabinofuranosidase C (505 aa).

N-linked (GlcNAc...) asparagine glycosylation is found at N152, N269, and N438.

This sequence belongs to the glycosyl hydrolase 51 family.

It localises to the secreted. The catalysed reaction is Hydrolysis of terminal non-reducing alpha-L-arabinofuranoside residues in alpha-L-arabinosides.. It functions in the pathway glycan metabolism; L-arabinan degradation. Its function is as follows. Alpha-L-arabinofuranosidase involved in the degradation of arabinoxylan, a major component of plant hemicellulose. Acts only on small linear 1,5-alpha-linked L-arabinofuranosyl oligosaccharides. This Aspergillus clavatus (strain ATCC 1007 / CBS 513.65 / DSM 816 / NCTC 3887 / NRRL 1 / QM 1276 / 107) protein is Probable alpha-L-arabinofuranosidase C (abfC).